The primary structure comprises 319 residues: ATP-dependent 6-phosphofructokinase (319 aa).

ATP is bound at residue G11. An ADP-binding site is contributed by 21-25 (RAVVR). Residues 72 to 73 (RC) and 102 to 105 (GDGS) contribute to the ATP site. Residue D103 participates in Mg(2+) binding. 125 to 127 (TID) contributes to the substrate binding site. The active-site Proton acceptor is D127. R154 lines the ADP pocket. Substrate-binding positions include R162 and 169–171 (MGR). Residues 185–187 (GAE), R211, and 213–215 (KKH) each bind ADP. Substrate-binding positions include E222, R243, and 249–252 (HIQR).

Belongs to the phosphofructokinase type A (PFKA) family. ATP-dependent PFK group I subfamily. Prokaryotic clade 'B1' sub-subfamily. As to quaternary structure, homotetramer. The cofactor is Mg(2+).

The protein resides in the cytoplasm. The enzyme catalyses beta-D-fructose 6-phosphate + ATP = beta-D-fructose 1,6-bisphosphate + ADP + H(+). It participates in carbohydrate degradation; glycolysis; D-glyceraldehyde 3-phosphate and glycerone phosphate from D-glucose: step 3/4. With respect to regulation, allosterically activated by ADP and other diphosphonucleosides, and allosterically inhibited by phosphoenolpyruvate. Catalyzes the phosphorylation of D-fructose 6-phosphate to fructose 1,6-bisphosphate by ATP, the first committing step of glycolysis. The protein is ATP-dependent 6-phosphofructokinase of Halalkalibacterium halodurans (strain ATCC BAA-125 / DSM 18197 / FERM 7344 / JCM 9153 / C-125) (Bacillus halodurans).